The following is a 220-amino-acid chain: Iron-sulfur cluster repair protein YtfE (220 aa).

This sequence belongs to the RIC family. YtfE subfamily. In terms of assembly, homodimer.

It is found in the cytoplasm. In terms of biological role, di-iron-containing protein involved in the repair of iron-sulfur clusters damaged by oxidative and nitrosative stress conditions. This chain is Iron-sulfur cluster repair protein YtfE, found in Citrobacter koseri (strain ATCC BAA-895 / CDC 4225-83 / SGSC4696).